We begin with the raw amino-acid sequence, 419 residues long: L-2-hydroxyglutarate dehydrogenase, mitochondrial (419 aa).

The N-terminal 51 residues, 1-51 (MVPALRYLVGACGRARGGFAGDFPGASGLASGRPRPLCGGSRSASTSSFDI), are a transit peptide targeting the mitochondrion. N6-acetyllysine occurs at positions 104 and 173.

The protein belongs to the L2HGDH family. FAD is required as a cofactor.

It is found in the mitochondrion. It carries out the reaction (S)-2-hydroxyglutarate + A = 2-oxoglutarate + AH2. The chain is L-2-hydroxyglutarate dehydrogenase, mitochondrial (L2HGDH) from Pongo abelii (Sumatran orangutan).